A 157-amino-acid polypeptide reads, in one-letter code: Crossover junction endodeoxyribonuclease RuvC (157 aa).

Active-site residues include Asp9, Glu70, and Asp142. Positions 9, 70, and 142 each coordinate Mg(2+).

This sequence belongs to the RuvC family. In terms of assembly, homodimer which binds Holliday junction (HJ) DNA. The HJ becomes 2-fold symmetrical on binding to RuvC with unstacked arms; it has a different conformation from HJ DNA in complex with RuvA. In the full resolvosome a probable DNA-RuvA(4)-RuvB(12)-RuvC(2) complex forms which resolves the HJ. Requires Mg(2+) as cofactor.

It localises to the cytoplasm. The catalysed reaction is Endonucleolytic cleavage at a junction such as a reciprocal single-stranded crossover between two homologous DNA duplexes (Holliday junction).. Functionally, the RuvA-RuvB-RuvC complex processes Holliday junction (HJ) DNA during genetic recombination and DNA repair. Endonuclease that resolves HJ intermediates. Cleaves cruciform DNA by making single-stranded nicks across the HJ at symmetrical positions within the homologous arms, yielding a 5'-phosphate and a 3'-hydroxyl group; requires a central core of homology in the junction. The consensus cleavage sequence is 5'-(A/T)TT(C/G)-3'. Cleavage occurs on the 3'-side of the TT dinucleotide at the point of strand exchange. HJ branch migration catalyzed by RuvA-RuvB allows RuvC to scan DNA until it finds its consensus sequence, where it cleaves and resolves the cruciform DNA. The protein is Crossover junction endodeoxyribonuclease RuvC of Cyanothece sp. (strain PCC 7425 / ATCC 29141).